The following is a 479-amino-acid chain: uncharacterized protein (479 aa).

Residues 180–203 (LGGEHSDSTNTELANPSSTTTRIT) are disordered. Over residues 187–202 (STNTELANPSSTTTRI) the composition is skewed to polar residues. Residues 240–462 (PGTTPEVVSY…LKPLVDAGYS (223 aa)) enclose the PE-PPE domain.

It belongs to the mycobacterial PPE family.

This is an uncharacterized protein from Mycobacterium tuberculosis (strain CDC 1551 / Oshkosh).